Reading from the N-terminus, the 809-residue chain is Spindle pole body component alp14 (809 aa).

HEAT repeat units lie at residues 127–164 (DSAA…QFGA) and 167–204 (IPSK…WTGD). 3 disordered regions span residues 233–274 (PPKQ…SDDQ), 507–608 (AKAP…SGAL), and 619–638 (ELDD…RYEH). The span at 239–253 (FLKSQQPTSEPNVET) shows a compositional bias: polar residues. Positions 262-274 (ENEESEPEPSDDQ) are enriched in acidic residues. Residues 509–518 (APTKKSKVKP) are compositionally biased toward basic residues. Composition is skewed to low complexity over residues 526-551 (VVVP…SPRK) and 582-595 (SRGL…SLQQ). Residues S543 and S548 each carry the phosphoserine modification. Over residues 597–608 (VKASTPLNSGAL) the composition is skewed to polar residues. Positions 637–697 (EHPKVLEDND…NTLRSARKAS (61 aa)) form a coiled coil. Phosphoserine is present on residues S697 and S720.

This sequence belongs to the TOG/XMAP215 family. Interacts with alp14.

It is found in the cytoplasm. The protein resides in the cytoskeleton. It localises to the microtubule organizing center. The protein localises to the spindle pole body. Its subcellular location is the chromosome. It is found in the centromere. The protein resides in the kinetochore. Required for bipolar spindle formation and proper chromosome segregation. Has a role in connecting the kinetochores and the plus end of pole to chromosome microtubules. Also required for the activation of the spindle checkpoint pathway. This chain is Spindle pole body component alp14 (alp14), found in Schizosaccharomyces pombe (strain 972 / ATCC 24843) (Fission yeast).